The chain runs to 501 residues: Myrosinase MA1 (501 aa).

Disulfide bonds link cysteine 6–cysteine 438, cysteine 14–cysteine 434, and cysteine 206–cysteine 214. A glycan (N-linked (GlcNAc...) asparagine) is linked at asparagine 21. Glutamine 39 contributes to the substrate binding site. Histidine 56 serves as a coordination point for Zn(2+). A glycan (N-linked (GlcNAc...) asparagine) is linked at asparagine 60. A Zn(2+)-binding site is contributed by aspartate 70. An N-linked (GlcNAc...) asparagine glycan is attached at asparagine 90. Substrate-binding residues include histidine 141 and asparagine 186. Residue glutamine 187 participates in L-ascorbate binding. Residues asparagine 218 and asparagine 244 are each glycosylated (N-linked (GlcNAc...) asparagine). Arginine 259 serves as a coordination point for L-ascorbate. Residues asparagine 265 and asparagine 292 are each glycosylated (N-linked (GlcNAc...) asparagine). Residue tyrosine 330 participates in substrate binding. N-linked (GlcNAc...) asparagine glycans are attached at residues asparagine 343, asparagine 346, and asparagine 361. Glutamate 409 functions as the Nucleophile in the catalytic mechanism. Substrate-binding positions include tryptophan 457 and 464 to 465 (EF). A glycan (N-linked (GlcNAc...) asparagine) is linked at asparagine 482.

It belongs to the glycosyl hydrolase 1 family. In terms of assembly, homodimer. In vacuoles called myrosin grains of a certain class of cells, myrosin cells, distributed in the cotyledons and the axis of the embryo as well as in different organs of the growing plant.

The protein resides in the vacuole. The catalysed reaction is a thioglucoside + H2O = a sugar + a thiol.. In terms of biological role, degradation of glucosinolates (glucose residue linked by a thioglucoside bound to an amino acid derivative) to glucose, sulfate and any of the products: thiocyanates, isothiocyanates, nitriles, epithionitriles or oxazolidine-2-thiones. The protein is Myrosinase MA1 of Sinapis alba (White mustard).